Consider the following 535-residue polypeptide: Succinate-semialdehyde dehydrogenase, mitochondrial (535 aa).

A mitochondrion-targeting transit peptide spans 1–47; that stretch reads MATCIWLRSCGARRLGSTFPGCRLRPRAGGLVPASGPAPGPAQLRCY. Lysine 126 carries the N6-acetyllysine; alternate modification. Position 126 is an N6-succinyllysine; alternate (lysine 126). 2 positions are modified to N6-succinyllysine: lysine 135 and lysine 184. 202–204 provides a ligand contact to NAD(+); that stretch reads TPW. A substrate-binding site is contributed by arginine 213. 228–231 provides a ligand contact to NAD(+); it reads KPAE. Lysine 265 is subject to N6-acetyllysine; alternate. Residue lysine 265 is modified to N6-succinyllysine; alternate. Residues 284–289 and glutamate 306 contribute to the NAD(+) site; that span reads GSTTTG. Glutamate 306 serves as the catalytic Proton acceptor. A substrate-binding site is contributed by arginine 334. The active-site Nucleophile is the cysteine 340. Residues cysteine 340 and cysteine 342 are joined by a disulfide bond. Lysine 365 bears the N6-acetyllysine mark. Position 402 is an N6-succinyllysine (lysine 402). An N6-acetyllysine modification is found at lysine 411. 438–440 is an NAD(+) binding site; the sequence is ETF. A substrate-binding site is contributed by serine 498. Serine 499 carries the post-translational modification Phosphoserine.

This sequence belongs to the aldehyde dehydrogenase family. As to quaternary structure, homotetramer. In terms of tissue distribution, brain, pancreas, heart, liver, skeletal muscle and kidney. Lower in placenta.

It localises to the mitochondrion. The enzyme catalyses succinate semialdehyde + NAD(+) + H2O = succinate + NADH + 2 H(+). It functions in the pathway amino-acid degradation; 4-aminobutanoate degradation. With respect to regulation, redox-regulated. Inhibited under oxydizing conditions. Inhibited by hydrogen peroxide H(2)O(2). In terms of biological role, catalyzes one step in the degradation of the inhibitory neurotransmitter gamma-aminobutyric acid (GABA). This Homo sapiens (Human) protein is Succinate-semialdehyde dehydrogenase, mitochondrial.